The primary structure comprises 324 residues: MKPSIILYKTLPDDLLHRLEAHFTVTQVPNLHPETVARHAQAFASAQGLLGASETVNRALLEKMPALRAASTISVGYDNVEVDALTARKIVLMHTPAVLTETVADTVMALMLATARRVVDVAERVKAGEWTESIGPAWFGVDVHHKTLGIVGMGRIGMALAQRAHFGFTMPVLYHARRRHQEAEDRFNARYCDLDTLLQEADFVCVILPLTTETRHLFGTTQFARMKSSAIFINAGRGPVVDENALIAALQNGEIYAAGLDVFEHEPLSVDSPLLNMSNVVAVPHIGSATHETRYNMMACAVDNLIDALQGKIEKNCVNPQAAG.

Active-site residues include Arg-237 and Glu-266. Catalysis depends on His-285, which acts as the Proton donor.

The protein belongs to the D-isomer specific 2-hydroxyacid dehydrogenase family. GhrB subfamily. In terms of assembly, homodimer.

Its subcellular location is the cytoplasm. The catalysed reaction is glycolate + NADP(+) = glyoxylate + NADPH + H(+). It catalyses the reaction (R)-glycerate + NAD(+) = 3-hydroxypyruvate + NADH + H(+). The enzyme catalyses (R)-glycerate + NADP(+) = 3-hydroxypyruvate + NADPH + H(+). Catalyzes the NADPH-dependent reduction of glyoxylate and hydroxypyruvate into glycolate and glycerate, respectively. The polypeptide is Glyoxylate/hydroxypyruvate reductase B (Salmonella paratyphi A (strain ATCC 9150 / SARB42)).